Here is an 843-residue protein sequence, read N- to C-terminus: Protein translocase subunit SecA 1 (843 aa).

Residues glutamine 91, 109–113 (GEGKT), and aspartate 498 each bind ATP. The span at 799–813 (EAKHVSAEDGKEKVK) shows a compositional bias: basic and acidic residues. The segment at 799-826 (EAKHVSAEDGKEKVKPKPIVKGDQVGRN) is disordered. Zn(2+) contacts are provided by cysteine 829, cysteine 831, cysteine 840, and histidine 841.

This sequence belongs to the SecA family. As to quaternary structure, monomer and homodimer. Part of the essential Sec protein translocation apparatus which comprises SecA, SecYEG and auxiliary proteins SecDF. Other proteins may also be involved. The cofactor is Zn(2+).

The protein resides in the cell membrane. The protein localises to the cytoplasm. It catalyses the reaction ATP + H2O + cellular proteinSide 1 = ADP + phosphate + cellular proteinSide 2.. In terms of biological role, part of the Sec protein translocase complex. Interacts with the SecYEG preprotein conducting channel. Has a central role in coupling the hydrolysis of ATP to the transfer of proteins into and across the cell membrane, serving as an ATP-driven molecular motor driving the stepwise translocation of polypeptide chains across the membrane. The polypeptide is Protein translocase subunit SecA 1 (Staphylococcus aureus (strain N315)).